Here is a 692-residue protein sequence, read N- to C-terminus: Alpha-amylase SusG (692 aa).

The signal sequence occupies residues 1 to 22 (MNKHLHFLSLLWLSMLMAFMTA). Residue C23 is the site of N-palmitoyl cysteine attachment. C23 is lipidated: S-diacylglycerol cysteine. Residues D73, D75, D77, Y79, and D81 each coordinate Mg(2+). Residue N153 coordinates Ca(2+). Starch binding regions lie at residues H154, 260–263 (YYGE), and 330–333 (NIMF). Residue D352 participates in Ca(2+) binding. Residues 386–392 (RLDAVKH) are starch binding. Residue D388 is the Nucleophile of the active site. A Ca(2+)-binding site is contributed by H392. Catalysis depends on E431, which acts as the Proton donor. 2 regions of interest (starch binding) are found at residues D437 and R457.

Belongs to the glycosyl hydrolase 13 family. Monomer. Ca(2+) is required as a cofactor.

Its subcellular location is the cell outer membrane. The enzyme catalyses Endohydrolysis of (1-&gt;4)-alpha-D-glucosidic linkages in polysaccharides containing three or more (1-&gt;4)-alpha-linked D-glucose units.. It functions in the pathway glycan degradation; starch degradation. Its function is as follows. Alpha-amylase that cleaves starch into oligosaccharides before internalization for degradation, the first step in starch degradation. This is Alpha-amylase SusG (susG) from Bacteroides thetaiotaomicron (strain ATCC 29148 / DSM 2079 / JCM 5827 / CCUG 10774 / NCTC 10582 / VPI-5482 / E50).